The sequence spans 240 residues: Ribonuclease 3 (240 aa).

The region spanning 4–134 (SRQPLLDALG…LLGAIYLQHG (131 aa)) is the RNase III domain. A Mg(2+)-binding site is contributed by E44. Residue D48 is part of the active site. Mg(2+) is bound by residues D120 and E123. E123 is a catalytic residue. The 69-residue stretch at 161-229 (DWKTSLQELT…AAAAWKALEV (69 aa)) folds into the DRBM domain.

It belongs to the ribonuclease III family. Homodimer. Requires Mg(2+) as cofactor.

It localises to the cytoplasm. It carries out the reaction Endonucleolytic cleavage to 5'-phosphomonoester.. Its function is as follows. Digests double-stranded RNA. Involved in the processing of primary rRNA transcript to yield the immediate precursors to the large and small rRNAs (23S and 16S). Processes some mRNAs, and tRNAs when they are encoded in the rRNA operon. Processes pre-crRNA and tracrRNA of type II CRISPR loci if present in the organism. The polypeptide is Ribonuclease 3 (Mycobacterium bovis (strain ATCC BAA-935 / AF2122/97)).